Reading from the N-terminus, the 196-residue chain is Cell division protein SepF (196 aa).

The disordered stretch occupies residues valine 15–lysine 80. The span at proline 57–lysine 72 shows a compositional bias: low complexity.

This sequence belongs to the SepF family. In terms of assembly, homodimer. Interacts with FtsZ.

It is found in the cytoplasm. Its function is as follows. Cell division protein that is part of the divisome complex and is recruited early to the Z-ring. Probably stimulates Z-ring formation, perhaps through the cross-linking of FtsZ protofilaments. Its function overlaps with FtsA. This is Cell division protein SepF from Lactococcus lactis subsp. cremoris (strain MG1363).